Reading from the N-terminus, the 609-residue chain is Arginine--tRNA ligase (609 aa).

A 'HIGH' region motif is present at residues 114 to 124; sequence VNPNKELHVGH.

It belongs to the class-I aminoacyl-tRNA synthetase family. In terms of assembly, monomer.

It is found in the cytoplasm. The enzyme catalyses tRNA(Arg) + L-arginine + ATP = L-arginyl-tRNA(Arg) + AMP + diphosphate. The sequence is that of Arginine--tRNA ligase from Deinococcus radiodurans (strain ATCC 13939 / DSM 20539 / JCM 16871 / CCUG 27074 / LMG 4051 / NBRC 15346 / NCIMB 9279 / VKM B-1422 / R1).